Reading from the N-terminus, the 216-residue chain is RNA pyrophosphohydrolase (216 aa).

Residues 6-149 form the Nudix hydrolase domain; the sequence is GFRPNVGIIL…KRDVYQLALT (144 aa). The Nudix box motif lies at 38-59; it reads GGIKYGETPMQAMYRELHEETG. Residues 159–191 are disordered; the sequence is AQRTDKSRGPRAPRYPRVANGHAASETPAAIDT.

The protein belongs to the Nudix hydrolase family. RppH subfamily. It depends on a divalent metal cation as a cofactor.

Functionally, accelerates the degradation of transcripts by removing pyrophosphate from the 5'-end of triphosphorylated RNA, leading to a more labile monophosphorylated state that can stimulate subsequent ribonuclease cleavage. The polypeptide is RNA pyrophosphohydrolase (Burkholderia pseudomallei (strain 668)).